A 194-amino-acid polypeptide reads, in one-letter code: dITP/XTP pyrophosphatase (194 aa).

Substrate is bound at residue S11–K16. D70 serves as the catalytic Proton acceptor. Mg(2+) is bound at residue D70. Substrate contacts are provided by residues S71, F149 to D152, K172, and H177 to R178.

Belongs to the HAM1 NTPase family. As to quaternary structure, homodimer. Requires Mg(2+) as cofactor.

The enzyme catalyses XTP + H2O = XMP + diphosphate + H(+). It carries out the reaction dITP + H2O = dIMP + diphosphate + H(+). The catalysed reaction is ITP + H2O = IMP + diphosphate + H(+). Pyrophosphatase that catalyzes the hydrolysis of nucleoside triphosphates to their monophosphate derivatives, with a high preference for the non-canonical purine nucleotides XTP (xanthosine triphosphate), dITP (deoxyinosine triphosphate) and ITP. Seems to function as a house-cleaning enzyme that removes non-canonical purine nucleotides from the nucleotide pool, thus preventing their incorporation into DNA/RNA and avoiding chromosomal lesions. This Thermosynechococcus vestitus (strain NIES-2133 / IAM M-273 / BP-1) protein is dITP/XTP pyrophosphatase.